Consider the following 106-residue polypeptide: ATP-dependent Clp protease adapter protein ClpS (106 aa).

The span at 1-14 (MTDKAGDWQEHGPQ) shows a compositional bias: basic and acidic residues. The interval 1 to 21 (MTDKAGDWQEHGPQVEEAPPQ) is disordered.

The protein belongs to the ClpS family. Binds to the N-terminal domain of the chaperone ClpA.

Functionally, involved in the modulation of the specificity of the ClpAP-mediated ATP-dependent protein degradation. This Alkalilimnicola ehrlichii (strain ATCC BAA-1101 / DSM 17681 / MLHE-1) protein is ATP-dependent Clp protease adapter protein ClpS.